A 186-amino-acid chain; its full sequence is Ribosome-recycling factor (186 aa).

Belongs to the RRF family.

The protein resides in the cytoplasm. Responsible for the release of ribosomes from messenger RNA at the termination of protein biosynthesis. May increase the efficiency of translation by recycling ribosomes from one round of translation to another. This Bartonella tribocorum (strain CIP 105476 / IBS 506) protein is Ribosome-recycling factor.